Here is a 172-residue protein sequence, read N- to C-terminus: RNA silencing suppressor p19 (172 aa).

The span at 1 to 20 (MERAIQGNDAREQANSERWD) shows a compositional bias: basic and acidic residues. The tract at residues 1–38 (MERAIQGNDAREQANSERWDGGSGGTTSPFKLPDESPS) is disordered.

It belongs to the tombusviruses protein p19 family. As to quaternary structure, homodimer.

Functionally, acts as a suppressor of RNA-mediated gene silencing, also known as post-transcriptional gene silencing (PTGS), a mechanism of plant viral defense that limits the accumulation of viral RNAs. Binds to short interfering RNAs (siRNAs) with high affinity. Acts as a molecular caliper to specifically select siRNAs based on the length of the duplex region of the RNA. This Capsicum annuum (Capsicum pepper) protein is RNA silencing suppressor p19.